The sequence spans 270 residues: Glucan endo-1,3-beta-glucosidase (270 aa).

The signal sequence occupies residues 1–18 (MNAFTFPLLLAFCAFAHG). In terms of domain architecture, GH16 spans 22 to 270 (LDWEDEFNGG…VEYVKKWTWN (249 aa)). The active-site Nucleophile is the glutamate 137. Glutamate 142 functions as the Proton donor in the catalytic mechanism.

It belongs to the glycosyl hydrolase 16 family.

It localises to the secreted. It catalyses the reaction Hydrolysis of (1-&gt;3)-beta-D-glucosidic linkages in (1-&gt;3)-beta-D-glucans.. Its activity is regulated as follows. Ca(2+) does not affect the enzyme activity nor the thermostability. Other cations, such as Mg(2+), Mn(2+), Cu(2+), Zn(2+), Ag(+) or Hg(2+) do not cause any serious adverse effect on the activity. Also no significant change in the activity in response to the addition of 1 mM EDTA. In terms of biological role, hydrolyzes laminarin majorily to glucose (G1), laminaribiose (L2), laminaritriose (L3), laminaritetraose (L4) and laminaripentaose (L5). Hydrolyzes laminarioligosaccharides L3, L4, L5 and laminarihexaose (L6) to G1, L2 and L3. Hardly hydrolyzes L2. Does not hydrolyze lichenan, pustulan, carboxymethyl cellulose, locust bean gum or soluble starch. The protein is Glucan endo-1,3-beta-glucosidase of Cryptopygus antarcticus (Antarctic springtail).